A 320-amino-acid polypeptide reads, in one-letter code: Malate dehydrogenase (320 aa).

NAD(+) is bound by residues 10-15 (GSGMIG) and Asp-34. Substrate contacts are provided by Arg-83 and Arg-89. NAD(+) is bound by residues Asn-96 and 119 to 121 (ITN). Substrate-binding residues include Asn-121 and Arg-152. The active-site Proton acceptor is the His-176.

The protein belongs to the LDH/MDH superfamily. MDH type 3 family.

The enzyme catalyses (S)-malate + NAD(+) = oxaloacetate + NADH + H(+). Its function is as follows. Catalyzes the reversible oxidation of malate to oxaloacetate. In Brucella melitensis biotype 2 (strain ATCC 23457), this protein is Malate dehydrogenase.